Reading from the N-terminus, the 343-residue chain is MWPNASSLGPCFRPMNITLEERRLIASPWFAASFCLVGLASNLLALSVLMGARQGSSQSRSSFLTFLCGLVLTDFMGLLVTGAIVVTQHFVLFEWQAVDPGCSLCHFMGVIMVFFGLCPLLLGAAMASERFLGITRPFSRPATASQRRAWTTVGLVWASALALGLLPLLGVGHYTVQYPGSWCFLTLGTDPGDVAFGLLFALLGSISVGMSFLLNTISVATLCHVYHGQATAQQRPRDCEVEMMVQLMGIMVVASICWMPLLVFIAQTVLQSPPAMSPTGQLSRLTERQLLIYLRVATWNQILDPWVYILFRRAVIQRFYPRLSTRSRSLSLQPQLTRRSTIH.

Residues M1–W29 lie on the Extracellular side of the membrane. N-linked (GlcNAc...) asparagine glycans are attached at residues N4 and N16. A helical transmembrane segment spans residues F30 to A52. The Cytoplasmic portion of the chain corresponds to R53 to F66. Residues L67–T87 traverse the membrane as a helical segment. Topologically, residues Q88–H106 are extracellular. C105 and C183 are disulfide-bonded. A helical membrane pass occupies residues F107–S128. Topologically, residues E129–A149 are cytoplasmic. The chain crosses the membrane as a helical span at residues W150 to G172. At H173–D193 the chain is on the extracellular side. The chain crosses the membrane as a helical span at residues V194 to V219. At A220–Q246 the chain is on the cytoplasmic side. A helical membrane pass occupies residues L247–L270. The Extracellular portion of the chain corresponds to Q271–Q289. A helical transmembrane segment spans residues L290–F311. At R312 to H343 the chain is on the cytoplasmic side. A phosphoserine mark is found at S329 and S331.

Belongs to the G-protein coupled receptor 1 family. Interacts with RPGRIP1L. Interacts with RACK1; the interaction regulates TBXA2R cell surface expression.

It localises to the cell membrane. Receptor for thromboxane A2 (TXA2), a potent stimulator of platelet aggregation. The activity of this receptor is mediated by a G-protein that activates a phosphatidylinositol-calcium second messenger system. In the kidney, the binding of TXA2 to glomerular TP receptors causes intense vasoconstriction. Activates phospholipase C and adenylyl cyclase. This chain is Thromboxane A2 receptor (TBXA2R), found in Bos taurus (Bovine).